A 446-amino-acid chain; its full sequence is Phosphoglucosamine mutase (446 aa).

The Phosphoserine intermediate role is filled by S101. Mg(2+)-binding residues include S101, D240, D242, and D244. The residue at position 101 (S101) is a Phosphoserine.

Belongs to the phosphohexose mutase family. Mg(2+) is required as a cofactor. In terms of processing, activated by phosphorylation.

It catalyses the reaction alpha-D-glucosamine 1-phosphate = D-glucosamine 6-phosphate. Functionally, catalyzes the conversion of glucosamine-6-phosphate to glucosamine-1-phosphate. The sequence is that of Phosphoglucosamine mutase from Coxiella burnetii (strain Dugway 5J108-111).